The sequence spans 101 residues: Protein Tat (101 aa).

The tract at residues 1–24 (MEPVDPNLEPWKHPGSQPRTACNN) is interaction with human CREBBP. The segment at 1–48 (MEPVDPNLEPWKHPGSQPRTACNNCYCKKCCFHCQVCFTKKGLGISYG) is transactivation. Zn(2+) contacts are provided by Cys22, Cys25, and Cys27. The tract at residues 22-37 (CNNCYCKKCCFHCQVC) is cysteine-rich. Position 28 is an N6-acetyllysine; by host PCAF (Lys28). Zn(2+)-binding residues include Cys30, His33, Cys34, and Cys37. Positions 38-48 (FTKKGLGISYG) are core. Residues 47 to 101 (YGRKKRRQRRRPPQDSQTHQSSLSKQPTSQLRGDPTGPTESKKKVERETETDPVH) are disordered. Residues 48 to 57 (GRKKRRQRRR) show a composition bias toward basic residues. The Nuclear localization signal, RNA-binding (TAR), and protein transduction signature appears at 49 to 57 (RKKRRQRRR). The interval 49-86 (RKKRRQRRRPPQDSQTHQSSLSKQPTSQLRGDPTGPTE) is interaction with the host capping enzyme RNGTT. An N6-acetyllysine; by host EP300 and GCN5L2 mark is found at Lys50 and Lys51. Asymmetric dimethylarginine; by host PRMT6 occurs at positions 52 and 53. Residues 61-77 (DSQTHQSSLSKQPTSQL) are compositionally biased toward polar residues. Lys71 is covalently cross-linked (Glycyl lysine isopeptide (Lys-Gly) (interchain with G-Cter in ubiquitin)). Positions 78-80 (RGD) match the Cell attachment site motif. Over residues 86–101 (ESKKKVERETETDPVH) the composition is skewed to basic and acidic residues.

The protein belongs to the lentiviruses Tat family. Interacts with host CCNT1. Associates with the P-TEFb complex composed at least of Tat, P-TEFb (CDK9 and CCNT1), TAR RNA, RNA Pol II. Recruits the HATs CREBBP, TAF1/TFIID, EP300, PCAF and GCN5L2. Interacts with host KAT5/Tip60; this interaction targets the latter to degradation. Interacts with the host deacetylase SIRT1. Interacts with host capping enzyme RNGTT; this interaction stimulates RNGTT. Binds to host KDR, and to the host integrins ITGAV/ITGB3 and ITGA5/ITGB1. Interacts with host KPNB1/importin beta-1 without previous binding to KPNA1/importin alpha-1. Interacts with EIF2AK2. Interacts with host nucleosome assembly protein NAP1L1; this interaction may be required for the transport of Tat within the nucleus, since the two proteins interact at the nuclear rim. Interacts with host C1QBP/SF2P32; this interaction involves lysine-acetylated Tat. Interacts with the host chemokine receptors CCR2, CCR3 and CXCR4. Interacts with host DPP4/CD26; this interaction may trigger an anti-proliferative effect. Interacts with host LDLR. Interacts with the host extracellular matrix metalloproteinase MMP1. Interacts with host PRMT6; this interaction mediates Tat's methylation. Interacts with, and is ubiquitinated by MDM2/Hdm2. Interacts with host PSMC3 and HTATIP2. Interacts with STAB1; this interaction may overcome SATB1-mediated repression of IL2 and IL2RA (interleukin) in T cells by binding to the same domain than HDAC1. Interacts (when acetylated) with human CDK13, thereby increasing HIV-1 mRNA splicing and promoting the production of the doubly spliced HIV-1 protein Nef. Interacts with host TBP; this interaction modulates the activity of transcriptional pre-initiation complex. Interacts with host RELA. Interacts with host PLSCR1; this interaction negatively regulates Tat transactivation activity by altering its subcellular distribution. Post-translationally, asymmetrical arginine methylation by host PRMT6 seems to diminish the transactivation capacity of Tat and affects the interaction with host CCNT1. Acetylation by EP300, CREBBP, GCN5L2/GCN5 and PCAF regulates the transactivation activity of Tat. EP300-mediated acetylation of Lys-50 promotes dissociation of Tat from the TAR RNA through the competitive binding to PCAF's bromodomain. In addition, the non-acetylated Tat's N-terminus can also interact with PCAF. PCAF-mediated acetylation of Lys-28 enhances Tat's binding to CCNT1. Lys-50 is deacetylated by SIRT1. In terms of processing, polyubiquitination by host MDM2 does not target Tat to degradation, but activates its transactivation function and fosters interaction with CCNT1 and TAR RNA. Post-translationally, phosphorylated by EIF2AK2 on serine and threonine residues adjacent to the basic region important for TAR RNA binding and function. Phosphorylation of Tat by EIF2AK2 is dependent on the prior activation of EIF2AK2 by dsRNA.

It localises to the host nucleus. Its subcellular location is the host nucleolus. The protein resides in the host cytoplasm. The protein localises to the secreted. Functionally, transcriptional activator that increases RNA Pol II processivity, thereby increasing the level of full-length viral transcripts. Recognizes a hairpin structure at the 5'-LTR of the nascent viral mRNAs referred to as the transactivation responsive RNA element (TAR) and recruits the cyclin T1-CDK9 complex (P-TEFb complex) that will in turn hyperphosphorylate the RNA polymerase II to allow efficient elongation. The CDK9 component of P-TEFb and other Tat-activated kinases hyperphosphorylate the C-terminus of RNA Pol II that becomes stabilized and much more processive. Other factors such as HTATSF1/Tat-SF1, SUPT5H/SPT5, and HTATIP2 are also important for Tat's function. Besides its effect on RNA Pol II processivity, Tat induces chromatin remodeling of proviral genes by recruiting the histone acetyltransferases (HATs) CREBBP, EP300 and PCAF to the chromatin. This also contributes to the increase in proviral transcription rate, especially when the provirus integrates in transcriptionally silent region of the host genome. To ensure maximal activation of the LTR, Tat mediates nuclear translocation of NF-kappa-B by interacting with host RELA. Through its interaction with host TBP, Tat may also modulate transcription initiation. Tat can reactivate a latently infected cell by penetrating in it and transactivating its LTR promoter. In the cytoplasm, Tat is thought to act as a translational activator of HIV-1 mRNAs. Extracellular circulating Tat can be endocytosed by surrounding uninfected cells via the binding to several surface receptors such as CD26, CXCR4, heparan sulfate proteoglycans (HSPG) or LDLR. Neurons are rarely infected, but they internalize Tat via their LDLR. Through its interaction with nuclear HATs, Tat is potentially able to control the acetylation-dependent cellular gene expression. Modulates the expression of many cellular genes involved in cell survival, proliferation or in coding for cytokines or cytokine receptors. Tat plays a role in T-cell and neurons apoptosis. Tat induced neurotoxicity and apoptosis probably contribute to neuroAIDS. Circulating Tat also acts as a chemokine-like and/or growth factor-like molecule that binds to specific receptors on the surface of the cells, affecting many cellular pathways. In the vascular system, Tat binds to ITGAV/ITGB3 and ITGA5/ITGB1 integrins dimers at the surface of endothelial cells and competes with bFGF for heparin-binding sites, leading to an excess of soluble bFGF. The chain is Protein Tat from Human immunodeficiency virus type 1 group M subtype B (isolate YU-2) (HIV-1).